We begin with the raw amino-acid sequence, 123 residues long: Large ribosomal subunit protein uL24 (123 aa).

This sequence belongs to the universal ribosomal protein uL24 family. Part of the 50S ribosomal subunit.

Its function is as follows. One of two assembly initiator proteins, it binds directly to the 5'-end of the 23S rRNA, where it nucleates assembly of the 50S subunit. Located at the polypeptide exit tunnel on the outside of the subunit. The protein is Large ribosomal subunit protein uL24 of Methanocella arvoryzae (strain DSM 22066 / NBRC 105507 / MRE50).